Here is an 85-residue protein sequence, read N- to C-terminus: Sodium channel neurotoxin MeuNaTxalpha-2 (85 aa).

A signal peptide spans methionine 1–serine 19. An LCN-type CS-alpha/beta domain is found at arginine 21–arginine 83. 4 disulfides stabilise this stretch: cysteine 31–cysteine 82, cysteine 35–cysteine 55, cysteine 41–cysteine 65, and cysteine 45–cysteine 67. Arginine amide is present on arginine 83.

It belongs to the long (4 C-C) scorpion toxin superfamily. Sodium channel inhibitor family. Alpha subfamily. Expressed by the venom gland.

Its subcellular location is the secreted. Its function is as follows. Alpha toxins bind voltage-independently at site-3 of sodium channels (Nav) and inhibit the inactivation of the activated channels, thereby blocking neuronal transmission. This toxin inhibits inactivation of Nav1.4/SCN4A (EC(50)=2.23 uM) and drosophila DmNav1 (EC(50)=220 nM). The toxin (1 uM) does not significantly shift the midpoint of activation at the two channels, but induces a significant depolarizing shift in the V(1/2) of inactivation of the channels. In addition, the toxin accelerates the recovery from fast inactivation in Nav1.4/SCN4A and DmNav1. It also shows antimicrobial activity. The polypeptide is Sodium channel neurotoxin MeuNaTxalpha-2 (Mesobuthus eupeus (Lesser Asian scorpion)).